The sequence spans 300 residues: Iron-dependent extradiol dioxygenase (300 aa).

VOC domains lie at 5–120 (SLGY…VFHG) and 142–270 (GMGH…FGCE). A Fe cation-binding site is contributed by H145. H200, H215, D250, and Y256 together coordinate substrate. H215 lines the Fe cation pocket. E266 lines the Fe cation pocket.

The protein belongs to the extradiol ring-cleavage dioxygenase family. Homodimer, but may form a homooctamer. Fe(2+) serves as cofactor.

The enzyme catalyses 3,4-dihydroxy-9,10-secoandrosta-1,3,5(10)-triene-9,17-dione + O2 = (1E,2Z)-3-hydroxy-5,9,17-trioxo-4,5:9,10-disecoandrosta-1(10),2-dien-4-oate + H(+). It participates in steroid metabolism; cholesterol metabolism. Catalyzes the meta-cleavage of 3,4-dihydroxy-9,10-seconandrost-1,3,5(10)-triene-9,17-dione (3,4-DHSA) to produce 4,5-9,10-diseco-3-hydroxy-5,9,17-trioxoandrosta-1(10),2-diene-4-oic acid (4,9-DSHA). This Mycobacterium tuberculosis (strain CDC 1551 / Oshkosh) protein is Iron-dependent extradiol dioxygenase (hsaC).